A 184-amino-acid chain; its full sequence is Ethylene-responsive transcription factor ERF010 (184 aa).

A DNA-binding region (AP2/ERF) is located at residues 20 to 77 (PYKGIRMRKWGKWVAEIREPNKRSRLWLGSYSTPEAAARAYDTAVFYLRGPTARLNFP). Residues 123 to 184 (QNRDSDVDNK…SSDEEWESKH (62 aa)) are disordered. The span at 161–172 (LLDRVDLNKLPD) shows a compositional bias: basic and acidic residues. The segment covering 174 to 184 (ESSDEEWESKH) has biased composition (acidic residues).

Belongs to the AP2/ERF transcription factor family. ERF subfamily.

The protein resides in the nucleus. Its function is as follows. Probably acts as a transcriptional activator. Binds to the GCC-box pathogenesis-related promoter element. May be involved in the regulation of gene expression by stress factors and by components of stress signal transduction pathways. In Arabidopsis thaliana (Mouse-ear cress), this protein is Ethylene-responsive transcription factor ERF010 (ERF010).